A 385-amino-acid polypeptide reads, in one-letter code: Probable di-N-acetylchitobiase 2 (385 aa).

An N-terminal signal peptide occupies residues 1–15 (MRIILLLFLIVFVVA). A GH18 domain is found at 16–377 (QSSSSSSSSG…DALASFFPQS (362 aa)). Residues Asn-51 and Asn-101 are each glycosylated (N-linked (GlcNAc...) asparagine). Glu-129 acts as the Proton donor in catalysis. Residues Asn-223, Asn-272, and Asn-296 are each glycosylated (N-linked (GlcNAc...) asparagine).

It belongs to the glycosyl hydrolase 18 family.

The protein localises to the lysosome. Involved in the degradation of asparagine-linked glycoproteins. May hydrolyze of N-acetyl-beta-D-glucosamine (1-4)N-acetylglucosamine chitobiose core from the reducing end of the bond. In Dictyostelium discoideum (Social amoeba), this protein is Probable di-N-acetylchitobiase 2 (ctbs2).